The primary structure comprises 218 residues: tRNA (guanine-N(7)-)-methyltransferase (218 aa).

The S-adenosyl-L-methionine site is built by glutamate 45, glutamate 70, aspartate 97, and aspartate 119. The active site involves aspartate 119. Substrate is bound at residue lysine 123. An interaction with RNA region spans residues 125–130 (RHEKRR). Substrate contacts are provided by residues aspartate 155 and 195-198 (TEYE).

Belongs to the class I-like SAM-binding methyltransferase superfamily. TrmB family.

The catalysed reaction is guanosine(46) in tRNA + S-adenosyl-L-methionine = N(7)-methylguanosine(46) in tRNA + S-adenosyl-L-homocysteine. It participates in tRNA modification; N(7)-methylguanine-tRNA biosynthesis. In terms of biological role, catalyzes the formation of N(7)-methylguanine at position 46 (m7G46) in tRNA. This chain is tRNA (guanine-N(7)-)-methyltransferase, found in Lactobacillus acidophilus (strain ATCC 700396 / NCK56 / N2 / NCFM).